Reading from the N-terminus, the 662-residue chain is UvrABC system protein B (662 aa).

The region spanning 25-414 (TGLNSKKRSQ…GTVVELIIRP (390 aa)) is the Helicase ATP-binding domain. Residue 38–45 (GITGSGKT) participates in ATP binding. The Beta-hairpin signature appears at 91 to 114 (YYDYYQPESYIVRTDTFIEKDSSI). The Helicase C-terminal domain maps to 430–592 (QVEDLISEIQ…IIPKTINRAI (163 aa)). In terms of domain architecture, UVR spans 622-657 (KAHMDKLKKEMFKAASNLEFEQAAKLRNQLKALEEA).

This sequence belongs to the UvrB family. In terms of assembly, forms a heterotetramer with UvrA during the search for lesions. Interacts with UvrC in an incision complex.

Its subcellular location is the cytoplasm. Its function is as follows. The UvrABC repair system catalyzes the recognition and processing of DNA lesions. A damage recognition complex composed of 2 UvrA and 2 UvrB subunits scans DNA for abnormalities. Upon binding of the UvrA(2)B(2) complex to a putative damaged site, the DNA wraps around one UvrB monomer. DNA wrap is dependent on ATP binding by UvrB and probably causes local melting of the DNA helix, facilitating insertion of UvrB beta-hairpin between the DNA strands. Then UvrB probes one DNA strand for the presence of a lesion. If a lesion is found the UvrA subunits dissociate and the UvrB-DNA preincision complex is formed. This complex is subsequently bound by UvrC and the second UvrB is released. If no lesion is found, the DNA wraps around the other UvrB subunit that will check the other stand for damage. The sequence is that of UvrABC system protein B from Rickettsia prowazekii (strain Madrid E).